Here is a 608-residue protein sequence, read N- to C-terminus: Aspartate--tRNA(Asp/Asn) ligase (608 aa).

Glutamate 179 serves as a coordination point for L-aspartate. The interval 203–206 (QLFK) is aspartate. Arginine 225 is a binding site for L-aspartate. Residues 225–227 (RDE) and glutamine 234 each bind ATP. Histidine 461 serves as a coordination point for L-aspartate. Glutamate 494 serves as a coordination point for ATP. Position 501 (arginine 501) interacts with L-aspartate. An ATP-binding site is contributed by 546 to 549 (GLDR).

Belongs to the class-II aminoacyl-tRNA synthetase family. Type 1 subfamily. As to quaternary structure, homodimer.

The protein resides in the cytoplasm. The catalysed reaction is tRNA(Asx) + L-aspartate + ATP = L-aspartyl-tRNA(Asx) + AMP + diphosphate. In terms of biological role, aspartyl-tRNA synthetase with relaxed tRNA specificity since it is able to aspartylate not only its cognate tRNA(Asp) but also tRNA(Asn). Reaction proceeds in two steps: L-aspartate is first activated by ATP to form Asp-AMP and then transferred to the acceptor end of tRNA(Asp/Asn). The protein is Aspartate--tRNA(Asp/Asn) ligase of Psychrobacter arcticus (strain DSM 17307 / VKM B-2377 / 273-4).